A 387-amino-acid polypeptide reads, in one-letter code: Ferrochelatase (387 aa).

Residues His196 and Glu277 each coordinate Fe cation.

The protein belongs to the ferrochelatase family.

The protein localises to the cytoplasm. It carries out the reaction heme b + 2 H(+) = protoporphyrin IX + Fe(2+). It functions in the pathway porphyrin-containing compound metabolism; protoheme biosynthesis; protoheme from protoporphyrin-IX: step 1/1. Its function is as follows. Catalyzes the ferrous insertion into protoporphyrin IX. This is Ferrochelatase from Rippkaea orientalis (strain PCC 8801 / RF-1) (Cyanothece sp. (strain PCC 8801)).